We begin with the raw amino-acid sequence, 384 residues long: 2-isopropylmalate synthase 2 (384 aa).

One can recognise a Pyruvate carboxyltransferase domain in the interval 9–260 (VYIVDTTLRD…DLGIDTSRFR (252 aa)). Mn(2+) contacts are provided by D18, H198, H200, and N234.

This sequence belongs to the alpha-IPM synthase/homocitrate synthase family. LeuA type 1 subfamily. Homodimer. The cofactor is Mn(2+).

Its subcellular location is the cytoplasm. The catalysed reaction is 3-methyl-2-oxobutanoate + acetyl-CoA + H2O = (2S)-2-isopropylmalate + CoA + H(+). The protein operates within amino-acid biosynthesis; L-leucine biosynthesis; L-leucine from 3-methyl-2-oxobutanoate: step 1/4. Functionally, catalyzes the condensation of the acetyl group of acetyl-CoA with 3-methyl-2-oxobutanoate (2-ketoisovalerate) to form 3-carboxy-3-hydroxy-4-methylpentanoate (2-isopropylmalate). The chain is 2-isopropylmalate synthase 2 from Caldanaerobacter subterraneus subsp. tengcongensis (strain DSM 15242 / JCM 11007 / NBRC 100824 / MB4) (Thermoanaerobacter tengcongensis).